Consider the following 188-residue polypeptide: Elongation factor P (188 aa).

It belongs to the elongation factor P family.

It is found in the cytoplasm. It participates in protein biosynthesis; polypeptide chain elongation. Its function is as follows. Involved in peptide bond synthesis. Stimulates efficient translation and peptide-bond synthesis on native or reconstituted 70S ribosomes in vitro. Probably functions indirectly by altering the affinity of the ribosome for aminoacyl-tRNA, thus increasing their reactivity as acceptors for peptidyl transferase. This Sulfurimonas denitrificans (strain ATCC 33889 / DSM 1251) (Thiomicrospira denitrificans (strain ATCC 33889 / DSM 1251)) protein is Elongation factor P.